The sequence spans 254 residues: MAETAPLRVQLIARTEFTVPPDVPWETDAEGGAALVEFAGRACYQSWSKPNPRTATNASYLRHIIEVGHLSVLEHASVSFYITGISRSCTHELIRHRHFSYSQLSQRYVPENDSQVVVPPGIEGDAELEGLFTAAADASRAAYAELLAKLEAKLMGDEPREGRATLRRKQARQAARSVLPNATETRIVVTGNYRAWRHFIAMRASEHADLEIRRLAIACLRELVAVAPAVFADFEIYPLADGTEVATTPLVTEA.

A ThyX domain is found at 7–237 (LRVQLIARTE…PAVFADFEIY (231 aa)). FAD contacts are provided by residues S71, 95 to 97 (RHR), and Q103. Residues 92–95 (ELIR), 103–107 (QLSQR), and R176 contribute to the dUMP site. Residues 95–105 (RHRHFSYSQLS) carry the ThyX motif motif. FAD contacts are provided by residues 192-194 (NYR) and H198. DUMP is bound at residue R203. R203 functions as the Involved in ionization of N3 of dUMP, leading to its activation in the catalytic mechanism.

It belongs to the thymidylate synthase ThyX family. Homotetramer. It depends on FAD as a cofactor.

The enzyme catalyses dUMP + (6R)-5,10-methylene-5,6,7,8-tetrahydrofolate + NADPH + H(+) = dTMP + (6S)-5,6,7,8-tetrahydrofolate + NADP(+). It functions in the pathway pyrimidine metabolism; dTTP biosynthesis. Catalyzes the reductive methylation of 2'-deoxyuridine-5'-monophosphate (dUMP) to 2'-deoxythymidine-5'-monophosphate (dTMP) while utilizing 5,10-methylenetetrahydrofolate (mTHF) as the methyl donor, and NADPH and FADH(2) as the reductant. This is Flavin-dependent thymidylate synthase from Mycobacterium sp. (strain JLS).